The following is a 326-amino-acid chain: DnaJ homolog subfamily B member 6 (326 aa).

One can recognise a J domain in the interval 2-69; the sequence is VDYYEVLGVQ…KKRDIYDKYG (68 aa). The interaction with HSP70 stretch occupies residues 2–146; that stretch reads VDYYEVLGVQ…TGSFFSAFSG (145 aa). The segment at 119 to 242 is interaction with KRT18; the sequence is FEDFFGNRRG…ADDDALAEER (124 aa). At Arg-135 the chain carries Omega-N-methylarginine. The tract at residues 249 to 326 is disordered; sequence ALPAQPAGLR…KKKKSTKGNH (78 aa). Position 277 is a phosphoserine (Ser-277).

In terms of assembly, homooligomer. Interacts with BAG3, HSPB8 and STUB1. Interacts with ALKBH1. Interacts with HSP70, KRT18 and PTTG.

Its subcellular location is the cytoplasm. The protein localises to the perinuclear region. It is found in the nucleus. The protein resides in the myofibril. It localises to the sarcomere. Its subcellular location is the z line. Functionally, has a stimulatory effect on the ATPase activity of HSP70 in a dose-dependent and time-dependent manner and hence acts as a co-chaperone of HSP70. Plays an indispensable role in the organization of KRT8/KRT18 filaments. Acts as an endogenous molecular chaperone for neuronal proteins including huntingtin. Suppresses aggregation and toxicity of polyglutamine-containing, aggregation-prone proteins. Also reduces cellular toxicity and caspase-3 activity. In Pongo abelii (Sumatran orangutan), this protein is DnaJ homolog subfamily B member 6 (DNAJB6).